The primary structure comprises 280 residues: Tumor necrosis factor ligand superfamily member 6 (280 aa).

Topologically, residues 1-80 (MQQPFNYPYP…KKRGNHSTGL (80 aa)) are cytoplasmic. The tract at residues 20–70 (SSPWAPPGTVLPCPTSVPRRPGQRRPPPPPPPPPLPPPPPSPLPPLPLPPL) is disordered. Positions 43-69 (RRPPPPPPPPPLPPPPPSPLPPLPLPP) are enriched in pro residues. A helical; Signal-anchor for type II membrane protein membrane pass occupies residues 81 to 101 (CLLVMFFMVLVALVGLGLGMF). The Extracellular segment spans residues 102-280 (QLFHLQKELA…SQTFFGLYKL (179 aa)). Residues 117–155 (TSQKHTASSLEKQIGHPSPPPEKKEQRKVAHLTGKPNSR) are disordered. Residues 144–280 (KVAHLTGKPN…SQTFFGLYKL (137 aa)) form the THD domain. Residue Asn-183 is glycosylated (N-linked (GlcNAc...) asparagine). Cys-201 and Cys-232 form a disulfide bridge. N-linked (GlcNAc...) asparagine glycans are attached at residues Asn-249 and Asn-259.

It belongs to the tumor necrosis factor family. In terms of assembly, homotrimer. Interacts with ARHGAP9, BAIAP2L1, BTK, CACNB3, CACNB4, CRK, DLG2, DNMBP, DOCK4, EPS8L3, FGR, FYB1, FYN, HCK, ITK, ITSN2, KALRN, LYN, MACC1, MIA, MPP4, MYO15A, NCF1, NCK1, NCK2, NCKIPSD, OSTF1, PIK3R1, PSTPIP1, RIMBP3C, SAMSN1, SH3GL3, SH3PXD2B, SH3PXD2A, SH3RF2, SKAP2, SNX33, SNX9, SORBS3, SPTA1, SRC, SRGAP1, SRGAP2, SRGAP3, TEC, TJP3 and YES1. Post-translationally, the soluble form derives from the membrane form by proteolytic processing. The membrane-bound form undergoes two successive intramembrane proteolytic cleavages. The first one is processed by ADAM10 producing an N-terminal fragment, which lacks the receptor-binding extracellular domain. This ADAM10-processed FasL (FasL APL) remnant form is still membrane anchored and further processed by SPPL2A that liberates the FasL intracellular domain (FasL ICD). FasL shedding by ADAM10 is a prerequisite for subsequent intramembrane cleavage by SPPL2A in T-cells. In terms of processing, phosphorylated by FGR on tyrosine residues; this is required for ubiquitination and subsequent internalization. N-glycosylated. Glycosylation enhances apoptotic activity. Post-translationally, monoubiquitinated.

The protein resides in the cell membrane. It is found in the cytoplasmic vesicle lumen. The protein localises to the lysosome lumen. It localises to the secreted. Its subcellular location is the nucleus. In terms of biological role, cytokine that binds to TNFRSF6/FAS, a receptor that transduces the apoptotic signal into cells. Involved in cytotoxic T-cell-mediated apoptosis, natural killer cell-mediated apoptosis and in T-cell development. Initiates fratricidal/suicidal activation-induced cell death (AICD) in antigen-activated T-cells contributing to the termination of immune responses. TNFRSF6/FAS-mediated apoptosis has also a role in the induction of peripheral tolerance. Binds to TNFRSF6B/DcR3, a decoy receptor that blocks apoptosis. Induces FAS-mediated activation of NF-kappa-B, initiating non-apoptotic signaling pathways. Can induce apoptosis but does not appear to be essential for this process. Its function is as follows. Cytoplasmic form induces gene transcription inhibition. This is Tumor necrosis factor ligand superfamily member 6 (FASLG) from Macaca fascicularis (Crab-eating macaque).